Consider the following 221-residue polypeptide: PKHD-type hydroxylase P9211_12561 (221 aa).

In terms of domain architecture, Fe2OG dioxygenase spans 80 to 174 (KVHGTMFTRS…RIVCVGWIQS (95 aa)). The Fe cation site is built by histidine 98, aspartate 100, and histidine 155. Arginine 165 provides a ligand contact to 2-oxoglutarate.

Requires Fe(2+) as cofactor. The cofactor is L-ascorbate.

This is PKHD-type hydroxylase P9211_12561 from Prochlorococcus marinus (strain MIT 9211).